Here is a 124-residue protein sequence, read N- to C-terminus: UPF0102 protein HEAR0176 (124 aa).

This sequence belongs to the UPF0102 family.

The sequence is that of UPF0102 protein HEAR0176 from Herminiimonas arsenicoxydans.